The following is a 648-amino-acid chain: 60 kDa heat shock protein homolog 1, mitochondrial (648 aa).

Residues 1 to 55 (MFRSCVPKAITSSRCFARMYSKDVRFGSGVRAMMIRGVDILADAVAVTMGPKGRS) constitute a mitochondrion transit peptide.

Belongs to the chaperonin (HSP60) family.

It is found in the mitochondrion matrix. Functionally, prevents misfolding and promotes the refolding and proper assembly of unfolded polypeptides generated under stress conditions. This is 60 kDa heat shock protein homolog 1, mitochondrial (Hsp60B) from Drosophila melanogaster (Fruit fly).